The chain runs to 105 residues: MAQERSGIAVGLNKGHKTTPLNTPKTRISRSKGKASRRTAFVRDIAREVVGLAPYERRVIELLRNAQDKRARKLAKKRLGTFTRGKRKVEDMQRVIAEARRVGAH.

The interval 1–36 is disordered; that stretch reads MAQERSGIAVGLNKGHKTTPLNTPKTRISRSKGKAS. Positions 27 to 36 are enriched in basic residues; the sequence is RISRSKGKAS.

The protein belongs to the eukaryotic ribosomal protein eL36 family. As to quaternary structure, component of the large ribosomal subunit (LSU).

It localises to the cytoplasm. Component of the ribosome, a large ribonucleoprotein complex responsible for the synthesis of proteins in the cell. The small ribosomal subunit (SSU) binds messenger RNAs (mRNAs) and translates the encoded message by selecting cognate aminoacyl-transfer RNA (tRNA) molecules. The large subunit (LSU) contains the ribosomal catalytic site termed the peptidyl transferase center (PTC), which catalyzes the formation of peptide bonds, thereby polymerizing the amino acids delivered by tRNAs into a polypeptide chain. The nascent polypeptides leave the ribosome through a tunnel in the LSU and interact with protein factors that function in enzymatic processing, targeting, and the membrane insertion of nascent chains at the exit of the ribosomal tunnel. This is Large ribosomal subunit protein eL36 from Emericella nidulans (strain FGSC A4 / ATCC 38163 / CBS 112.46 / NRRL 194 / M139) (Aspergillus nidulans).